A 223-amino-acid chain; its full sequence is Putative UPF0607 protein LOC392364 (223 aa).

Residues 110–138 (KMEVRAEEPKEATEVKDQVETQEQEDNKR) are compositionally biased toward basic and acidic residues. The interval 110-223 (KMEVRAEEPK…GRTPPARQHG (114 aa)) is disordered. Polar residues-rich tracts occupy residues 145–163 (EAAS…TSPR) and 174–186 (QLKS…QTDK).

This sequence belongs to the UPF0607 family.

The chain is Putative UPF0607 protein LOC392364 from Homo sapiens (Human).